Consider the following 843-residue polypeptide: MAKPLTDGERRKQISVRGLAGLGDVAEVRKSFNRHLHFTLVKDRNVATRRDYYLALAHTVRDHLVGRWIRTQQRYYERDPKRIYYLSLEFYMGRTLQNTMVNLGLQNACDEAIYQLGLDLEELEEIEEDAGLGNGGLGRLAACFLDSMATLGLAAYGYGIRYEFGIFNQKIVNGWQVEEADDWLRYGNPWEKARPEYMLPVHFYGRVEHSPEGVRWLDTQVVLAMPYDTPVPGYKNDTVNTMRLWSAKAPNDFKLHDFNVGGYIEAVLDRNLAENISRVLYPNDNFFEGKELRLKQEYFVVAATLQDIIRRFKSSKFGCRDPVRTSFETFPDKVAIQLNDTHPALAIPELMRILVDVEKVDWGKAWEITKKTCAYTNHTVLPEALERWPVSMFEKLLPRHLDIIYAINQRHLDHVAALFPGDVDRLRRMSVIEEGDCKRINMAHLCVIGSHAVNGVARIHSEIVRQSVFKDFYELEPEKFQNKTNGITPRRWLLLCNPGLAETIVERIGEDFLTDLSQLKKLLPLVGDEALIRDVAQVKQENKVKFSAFLEKQYGVKVNPSSMFDVHVKRIHEYKRQLLNCLHVVTLYNRIKKDPTQAFVPRTVMIGGKAAPGYHMAKKIIKLVTSIGDIVNHDPIVGDRLKVIFLENYRVSLAEKVIPAADLSQQISTAGTEASGTGNMKFMLNGALTIGTMDGANVEMAEEAGAENLFIFGLRVEDVEALDRKGYNAHEYYNHLPELQQAVDQINSGFFSPREPDCFKDVVNMLLNHDRFKVFADYEAYVACQAQVDQLYRNPKEWTKKVIRNIACSGKFSSDRTITEYARDIWGAEPPALQTPPPSLPRD.

Ala-2 is modified (N-acetylalanine). Ser-15 is modified (phosphoserine; by PHK; in form phosphorylase A). The AMP site is built by Asp-43, Tyr-197, and Arg-310. Tyr-197 carries the post-translational modification Phosphotyrosine. Tyr-473 bears the Phosphotyrosine mark. Pyridoxal 5'-phosphate is bound at residue Lys-569. The interval Thr-677–Gly-678 is pyridoxal 5'-phosphate. Position 681 is an N6-(pyridoxal phosphate)lysine (Lys-681).

The protein belongs to the glycogen phosphorylase family. Homodimer. Dimers associate into a tetramer to form the enzymatically active phosphorylase A. Pyridoxal 5'-phosphate is required as a cofactor. Post-translationally, phosphorylation of Ser-15 converts phosphorylase B (unphosphorylated) to phosphorylase A.

The enzyme catalyses [(1-&gt;4)-alpha-D-glucosyl](n) + phosphate = [(1-&gt;4)-alpha-D-glucosyl](n-1) + alpha-D-glucose 1-phosphate. Activity of phosphorylase is controlled both by allosteric means (through the non-covalent binding of metabolites) and by covalent modification. Thus AMP allosterically activates, whereas ATP, ADP, and glucose-6-phosphate allosterically inhibit, phosphorylase B. Functionally, glycogen phosphorylase that regulates glycogen mobilization. Phosphorylase is an important allosteric enzyme in carbohydrate metabolism. Enzymes from different sources differ in their regulatory mechanisms and in their natural substrates. However, all known phosphorylases share catalytic and structural properties. This is Glycogen phosphorylase, brain form (PYGB) from Ovis aries (Sheep).